The chain runs to 186 residues: Histone deacetylase complex subunit SAP25 (186 aa).

Disordered stretches follow at residues 1 to 25 (MSPLPLRDPSHQANAGPRLVEPSCG) and 148 to 186 (EQTPNCVASSLPSTSCPDPVSVSEDPGPSGDQSCSGTDT). Composition is skewed to polar residues over residues 148–163 (EQTPNCVASSLPSTSC) and 177–186 (GDQSCSGTDT).

As to quaternary structure, may be a component of the mSIN3A corepressor complex. Interacts with SIN3A and HDAC2. As to expression, widely expressed.

Its subcellular location is the nucleus. The protein resides in the cytoplasm. Functionally, involved in the transcriptional repression mediated by the mSIN3A but not the N-CoR corepressor complex. This Mus musculus (Mouse) protein is Histone deacetylase complex subunit SAP25 (Sap25).